We begin with the raw amino-acid sequence, 430 residues long: Asparagine--tRNA ligase (430 aa).

This sequence belongs to the class-II aminoacyl-tRNA synthetase family. Homodimer.

Its subcellular location is the cytoplasm. It catalyses the reaction tRNA(Asn) + L-asparagine + ATP = L-asparaginyl-tRNA(Asn) + AMP + diphosphate + H(+). The polypeptide is Asparagine--tRNA ligase (Staphylococcus aureus (strain MSSA476)).